Here is a 168-residue protein sequence, read N- to C-terminus: MRMTFLSYLKQWRGTAKEAFENVSIVAKFLCLLHVTDRYIISTTHVHGPSMLPTLNLTGDVILAEHLSHRFGKIGLGDVVLVRSPRDPKRMVTKRILGLEGDRLTFSADPLVGDASVSVLVPKGHVWIQGDNLYASTDSRHFGPVPYSLIEGKALLRVWPPEYFGSLR.

A mitochondrion-targeting transit peptide spans 1 to 47; it reads MRMTFLSYLKQWRGTAKEAFENVSIVAKFLCLLHVTDRYIISTTHVH. Catalysis depends on residues S50 and K94.

Belongs to the peptidase S26 family. IMP1 subfamily. In terms of assembly, heterodimer of 2 subunits, IMP1A/B and IMP12.

It localises to the mitochondrion inner membrane. Functionally, catalyzes the removal of transit peptides required for the targeting of proteins from the mitochondrial matrix, across the inner membrane, into the inter-membrane space. The sequence is that of Mitochondrial ATP-independent inner membrane protease subunit 1a from Arabidopsis thaliana (Mouse-ear cress).